Reading from the N-terminus, the 339-residue chain is Anthranilate phosphoribosyltransferase (339 aa).

5-phospho-alpha-D-ribose 1-diphosphate contacts are provided by residues G81, 84–85 (GD), S89, 91–94 (NVST), 109–117 (KHGNRALSS), and A121. G81 provides a ligand contact to anthranilate. Mg(2+) is bound at residue S93. Position 112 (N112) interacts with anthranilate. R167 contacts anthranilate. D226 and E227 together coordinate Mg(2+).

This sequence belongs to the anthranilate phosphoribosyltransferase family. In terms of assembly, homodimer. Mg(2+) serves as cofactor.

The catalysed reaction is N-(5-phospho-beta-D-ribosyl)anthranilate + diphosphate = 5-phospho-alpha-D-ribose 1-diphosphate + anthranilate. The protein operates within amino-acid biosynthesis; L-tryptophan biosynthesis; L-tryptophan from chorismate: step 2/5. Its function is as follows. Catalyzes the transfer of the phosphoribosyl group of 5-phosphorylribose-1-pyrophosphate (PRPP) to anthranilate to yield N-(5'-phosphoribosyl)-anthranilate (PRA). In Rhodopseudomonas palustris (strain BisA53), this protein is Anthranilate phosphoribosyltransferase.